The primary structure comprises 111 residues: Large ribosomal subunit protein uL29 (111 aa).

A large ribosomal subunit protein uL29 region spans residues 1 to 85 (MTVAKELRQK…TKKTNEAAVN (85 aa)). The interval 86-111 (AWKQHLEANKAKLLKSRAKREDASKK) is unknown.

Belongs to the universal ribosomal protein uL29 family.

The chain is Large ribosomal subunit protein uL29 from Mycoplasma pneumoniae (strain ATCC 29342 / M129 / Subtype 1) (Mycoplasmoides pneumoniae).